Here is a 367-residue protein sequence, read N- to C-terminus: Phosphoribosylaminoimidazole-succinocarboxamide synthase (367 aa).

It belongs to the SAICAR synthetase family.

The enzyme catalyses 5-amino-1-(5-phospho-D-ribosyl)imidazole-4-carboxylate + L-aspartate + ATP = (2S)-2-[5-amino-1-(5-phospho-beta-D-ribosyl)imidazole-4-carboxamido]succinate + ADP + phosphate + 2 H(+). The protein operates within purine metabolism; IMP biosynthesis via de novo pathway; 5-amino-1-(5-phospho-D-ribosyl)imidazole-4-carboxamide from 5-amino-1-(5-phospho-D-ribosyl)imidazole-4-carboxylate: step 1/2. This is Phosphoribosylaminoimidazole-succinocarboxamide synthase from Shewanella oneidensis (strain ATCC 700550 / JCM 31522 / CIP 106686 / LMG 19005 / NCIMB 14063 / MR-1).